The sequence spans 1098 residues: Ran-binding protein 16 (1098 aa).

The protein belongs to the exportin family. As to quaternary structure, binds to nucleoporins and the GTP-bound form of Ran.

It is found in the cytoplasm. The protein resides in the nucleus. In terms of biological role, may function as a nuclear transport receptor. The polypeptide is Ran-binding protein 16 (Ranbp16) (Drosophila melanogaster (Fruit fly)).